Reading from the N-terminus, the 411-residue chain is Putative glycosyltransferase SCO3672 (411 aa).

10 consecutive transmembrane segments (helical) span residues 7 to 27 (IAAATVTATASFLLTAVLAAL), 45 to 65 (PVPLLGGVAVVLVTAVVAWAG), 70 to 90 (VVPLGPAAGRLLAAATVVGAL), 120 to 140 (ETGPVAGALAVGWVALVTGAF), 148 to 168 (GVVGTVGVVTAFGVGACAAVE), 169 to 189 (LMDGPAVLLLVLAAALAGFLL), 197 to 217 (IALGACGSLFTGFLLTGAAVL), 227 to 247 (GAGVLCALTAVPVADAVLVLL), 277 to 297 (GVVVVLGGAALCAVVVGVLAH), and 301 to 321 (VGGQAALWVAGGAAAGVLGLL).

This sequence belongs to the glycosyltransferase 4 family.

The protein localises to the cell membrane. The chain is Putative glycosyltransferase SCO3672 from Streptomyces coelicolor (strain ATCC BAA-471 / A3(2) / M145).